Consider the following 104-residue polypeptide: Large ribosomal subunit protein uL24 (104 aa).

The protein belongs to the universal ribosomal protein uL24 family. Part of the 50S ribosomal subunit.

In terms of biological role, one of two assembly initiator proteins, it binds directly to the 5'-end of the 23S rRNA, where it nucleates assembly of the 50S subunit. One of the proteins that surrounds the polypeptide exit tunnel on the outside of the subunit. This chain is Large ribosomal subunit protein uL24, found in Yersinia enterocolitica serotype O:8 / biotype 1B (strain NCTC 13174 / 8081).